Reading from the N-terminus, the 96-residue chain is Protein transport protein Sec61 subunit beta (96 aa).

The span at 1–17 (MPGPTPSGTNVGSSGRS) shows a compositional bias: polar residues. A disordered region spans residues 1-54 (MPGPTPSGTNVGSSGRSPSKAVAARAAGSTVRQRKNASCGTRSAGRTTSAGTGG). At Pro2 the chain carries N-acetylproline. The Cytoplasmic segment spans residues 2–71 (PGPTPSGTNV…DSPGLKVGPV (70 aa)). Ser7 is modified (phosphoserine). A Phosphothreonine modification is found at Thr9. 3 positions are modified to phosphoserine: Ser13, Ser14, and Ser17. Cys39 carries S-palmitoyl cysteine lipidation. A compositionally biased stretch (low complexity) spans 40-50 (GTRSAGRTTSA). The chain crosses the membrane as a helical span at residues 72-91 (PVLVMSLLFIASVFMLHIWG). The Lumenal portion of the chain corresponds to 92-96 (KYTRS).

This sequence belongs to the SEC61-beta family. As to quaternary structure, the SEC61 channel-forming translocon complex consists of channel-forming core components SEC61A1, SEC61B and SEC61G and different auxiliary components such as SEC62 and SEC63. The SEC61 channel associates with the multi-pass translocon (MPT) complex. Interacts with TRAM1.

The protein localises to the endoplasmic reticulum membrane. Functionally, component of SEC61 channel-forming translocon complex that mediates transport of signal peptide-containing precursor polypeptides across the endoplasmic reticulum (ER). Forms a ribosome receptor and a gated pore in the ER membrane, both functions required for cotranslational translocation of nascent polypeptides. The SEC61 channel is also involved in ER membrane insertion of transmembrane proteins: it mediates membrane insertion of the first few transmembrane segments of proteins, while insertion of subsequent transmembrane regions of multi-pass membrane proteins is mediated by the multi-pass translocon (MPT) complex. The SEC61 channel cooperates with the translocating protein TRAM1 to import nascent proteins into the ER. The protein is Protein transport protein Sec61 subunit beta (SEC61B) of Canis lupus familiaris (Dog).